A 675-amino-acid chain; its full sequence is Regulator of G-protein signaling 9 (675 aa).

Positions 30–105 (PETGVRMHNQ…PDSSLYRFQT (76 aa)) constitute a DEP domain. In terms of domain architecture, G protein gamma spans 222-283 (VRKEIMYYQQ…DTQFWDLNAK (62 aa)). The RGS domain occupies 299 to 414 (NFSELIRDPK…LKSPIYKEML (116 aa)). 2 disordered regions span residues 524 to 571 (RVAL…PPKA) and 637 to 662 (DSGT…EKEV). The span at 542–551 (SGANSGPSVT) shows a compositional bias: polar residues. Basic and acidic residues-rich tracts occupy residues 552 to 562 (ENREPSADHSR) and 646 to 662 (DDPR…EKEV).

In terms of assembly, heterodimer with GNB5. Interacts with RGS7BP, leading to regulate the subcellular location of the heterodimer formed with GNB5. Component of the RGS9-1-Gbeta5 complex composed of RGS9 (RGS9-1), Gbeta5 (GNB5) and RGS9BP. Interacts with PDE6G and GNAT1. Post-translationally, retinal isoform 1 is light-dependent phosphorylated at 'Ser-475'. Phosphorylation is decreased by light exposition. Interaction with RGS9BP is decreased when isoform 1 is phosphorylated at 'Ser-475'. In terms of tissue distribution, isoform 1 is expressed in photoreceptor outer segments. Isoform 2 is expressed in brain striatum.

The protein localises to the membrane. In terms of biological role, inhibits signal transduction by increasing the GTPase activity of G protein alpha subunits thereby driving them into their inactive GDP-bound form. Binds to GNAT1. Involved in phototransduction; key element in the recovery phase of visual transduction. The polypeptide is Regulator of G-protein signaling 9 (Rgs9) (Mus musculus (Mouse)).